The chain runs to 431 residues: E3 ubiquitin-protein ligase RNF128 (431 aa).

A signal peptide spans 1–38 (MGQLPGAGVFCRGGCGFSRLLAWCFLLVLSPQTPGSRG). N-linked (GlcNAc...) asparagine glycans are attached at residues asparagine 48, asparagine 59, and asparagine 101. The PA domain maps to 75-186 (SPLEPVAGVL…LKGTKILQSI (112 aa)). A helical transmembrane segment spans residues 211 to 231 (IFFVSVSFFIITAATVGYFIF). The RING-type; atypical zinc-finger motif lies at 280 to 321 (CAVCIELYKPNDLVRILTCNHVFHKTCVDPWLLEHRTCPMCK). Residues 345-354 (VSNETSSNAS) show a composition bias toward polar residues. Residues 345-431 (VSNETSSNAS…QETTVREIKS (87 aa)) form a disordered region.

Auto-ubiquitinated. Controls the development of T-cell clonal anergy by ubiquitination.

The protein localises to the cytoplasm. The protein resides in the endomembrane system. Its subcellular location is the cytoskeleton. It localises to the perinuclear region. The enzyme catalyses S-ubiquitinyl-[E2 ubiquitin-conjugating enzyme]-L-cysteine + [acceptor protein]-L-lysine = [E2 ubiquitin-conjugating enzyme]-L-cysteine + N(6)-ubiquitinyl-[acceptor protein]-L-lysine.. It functions in the pathway protein modification; protein ubiquitination. Functionally, E3 ubiquitin-protein ligase that catalyzes 'Lys-27', 'Lys-48'- or 'Lys-63'-linked polyubiquitin chains formation and plays a role in different biological processes such as modulation of immune response, cytoskeletal dynamics or protein homeostasis. Inhibits IL2 and IL4 transcription, thereby playing an important role in the induction of the anergic phenotype, a long-term stable state of T-lymphocyte unresponsiveness to antigenic stimulation associated with the blockade of interleukin production. Ubiquitinates ARPC5 with 'Lys-48' linkages and COR1A with 'Lys-63' linkages leading to their degradation, down-regulation of these cytoskeletal components results in impaired lamellipodium formation and reduced accumulation of F-actin at the immunological synapse. Functions in the patterning of the dorsal ectoderm; sensitizes ectoderm to respond to neural-inducing signals. Plays a positive role in innate immune response by promoting 'Lys-63'-linked ubiquitination of TBK1 after RNA- or DNA-virus infection. Regulates alveolar macrophage activation and neutrophil infiltration by interacting with TLR4, targeting it for degradation, and inhibiting NF-kappa-B activation, hence decreasing pro-inflammatory cytokines. Negatively regulates the IL-3/STAT5 signaling pathway by facilitating 'Lys-27'-linked polyubiquitination of IL3RA leading to its degradation via lysosomal pathway. Directly regulates the N-glycosylation process in the endoplasmic reticulum by targeting the glycosyl-transferase RPN1 for ubiquitination and degradation. Other substrates targeted for degradation by RNF128 include transmembrane proteins CD40L, CD83 or the tetraspanin CD151. This chain is E3 ubiquitin-protein ligase RNF128 (RNF128), found in Bos taurus (Bovine).